A 384-amino-acid polypeptide reads, in one-letter code: Cobalt-precorrin-5B C(1)-methyltransferase (384 aa).

This sequence belongs to the CbiD family.

It catalyses the reaction Co-precorrin-5B + S-adenosyl-L-methionine = Co-precorrin-6A + S-adenosyl-L-homocysteine. Its pathway is cofactor biosynthesis; adenosylcobalamin biosynthesis; cob(II)yrinate a,c-diamide from sirohydrochlorin (anaerobic route): step 6/10. Functionally, catalyzes the methylation of C-1 in cobalt-precorrin-5B to form cobalt-precorrin-6A. This Marinomonas sp. (strain MWYL1) protein is Cobalt-precorrin-5B C(1)-methyltransferase.